Here is a 232-residue protein sequence, read N- to C-terminus: Glycerol-3-phosphate acyltransferase (232 aa).

The next 6 membrane-spanning stretches (helical) occupy residues 4-24 (FLAIITVAYLIGSIPTSIIAG), 56-76 (AVTLIDIAKGTIAAVPVVAFF), 90-110 (IALNLIAGMSAVIGHVFTVFA), 124-144 (MLIGIAPISMLMVIGVFILAI), 147-167 (TRYVSVGSILAAIAFPLIIAI), and 191-211 (SLDYHLLIFGGIVAAAIIYTH).

This sequence belongs to the PlsY family. As to quaternary structure, probably interacts with PlsX.

The protein localises to the cell inner membrane. The catalysed reaction is an acyl phosphate + sn-glycerol 3-phosphate = a 1-acyl-sn-glycero-3-phosphate + phosphate. The protein operates within lipid metabolism; phospholipid metabolism. In terms of biological role, catalyzes the transfer of an acyl group from acyl-phosphate (acyl-PO(4)) to glycerol-3-phosphate (G3P) to form lysophosphatidic acid (LPA). This enzyme utilizes acyl-phosphate as fatty acyl donor, but not acyl-CoA or acyl-ACP. The protein is Glycerol-3-phosphate acyltransferase of Chlorobaculum parvum (strain DSM 263 / NCIMB 8327) (Chlorobium vibrioforme subsp. thiosulfatophilum).